We begin with the raw amino-acid sequence, 481 residues long: Protein hedgehog (481 aa).

Positions 1 to 19 are cleaved as a signal peptide; sequence MDNQAVSALWSCASATCLS. Residues 20–90 constitute a propeptide that is removed on maturation; it reads LDAKRHSIEP…LALNFRHAHS (71 aa). A disordered region spans residues 26–56; sequence SIEPNPDGQASPDVNNNNNNHNKSTTTVDAH. Cysteine 91 is lipidated: N-palmitoyl cysteine. Ca(2+) contacts are provided by glutamate 155, glutamate 156, aspartate 161, threonine 191, glutamate 192, aspartate 195, and aspartate 197. Glycine 264 carries Cholesterol glycine ester lipidation.

This sequence belongs to the hedgehog family. As to quaternary structure, interacts with shf. The C-terminal part of the hedgehog protein precursor displays an autoproteolysis activity that results in the cleavage of the full-length protein into two parts (N-product and C-product). In addition, the C-terminal part displays a cholesterol transferase activity that results by the covalent attachment of a cholesterol moiety to the C-terminal of the newly generated N-product. The N-product is the active species in both local and long-range signaling, whereas the C-product has no signaling activity. In terms of processing, cholesterylation is required for N-product targeting to lipid rafts and multimerization. Post-translationally, N-palmitoylation by Rasp of the hedgehog N-product, within the secretory pathway, is required for the embryonic and larval patterning activities of the hedgehog signal.

It is found in the nucleus. The protein resides in the cytoplasm. The protein localises to the cell membrane. The catalysed reaction is glycyl-L-cysteinyl-[protein] + cholesterol + H(+) = [protein]-C-terminal glycyl cholesterol ester + N-terminal L-cysteinyl-[protein]. In terms of biological role, the C-terminal part of the hedgehog protein precursor displays an autoproteolysis activity that results in the cleavage of the full-length protein into two parts (N-product and C-product). In addition, the C-terminal part displays a cholesterol transferase activity that results by the covalent attachment of a cholesterol moiety to the C-terminal of the newly generated N-product. Once cleaved, the C-product has no signaling activity and diffuses from the cell. Functionally, the dually lipidated hedgehog protein N-product is a morphogen which is essential for a variety of patterning events during development. Establishes the anterior-posterior axis of the embryonic segments and patterns the larval imaginal disks. Binds to the patched (ptc) receptor, which functions in association with smoothened (smo), to activate the transcription of target genes wingless (wg), decapentaplegic (dpp) and ptc. In the absence of hh, ptc represses the constitutive signaling activity of smo through fused (fu). Essential component of a signaling pathway which regulates the Duox-dependent gut immune response to bacterial uracil; required to activate Cad99C-dependent endosome formation, norpA-dependent Ca2+ mobilization and p38 MAPK, which are essential steps in the Duox-dependent production of reactive oxygen species (ROS) in response to intestinal bacterial infection. During photoreceptor differentiation, it up-regulates transcription of Ubr3, which in turn promotes the hh-signaling pathway by mediating the ubiquitination and degradation of cos. This Drosophila hydei (Fruit fly) protein is Protein hedgehog.